The sequence spans 1109 residues: Protein phosphatase 1 regulatory subunit 3A (1109 aa).

Phosphoserine; by GSK3 is present on residues Ser-40 and Ser-44. Ser-48 bears the Phosphoserine; by PKA and ISPK mark. Ser-51 bears the Phosphoserine mark. Thr-58 carries the phosphothreonine modification. Positions 64-67 (RRVS) match the PP1-binding motif motif. Ser-67 is modified (phosphoserine; by PKA). The region spanning 124 to 232 (QLQVQKAMLE…NNNGTNYTLV (109 aa)) is the CBM21 domain. Residues 236-251 (KEPEPEPGKPLEEAPS) show a composition bias toward basic and acidic residues. 4 disordered regions span residues 236 to 278 (KEPE…NFEN), 340 to 424 (GKNT…SDGS), 436 to 455 (DDNANPAHGSGRGEISCSFP), and 493 to 517 (YFKKSTENRPSEEDYGTSKDNKEKR). Polar residues-rich tracts occupy residues 340 to 352 (GKNTLSSDPSNIP), 360 to 384 (KNQSHSEACTDLSQRLLSPGSSAES), and 396 to 406 (YSSGNESSHQP). Ser-843 bears the Phosphoserine mark. Disordered regions lie at residues 945 to 985 (SATE…RKEK) and 1011 to 1048 (SRENVERERHENEGLINSGDKEFESSASSSLPVQETQD). Over residues 951 to 963 (YNCSPTRETQGQP) the composition is skewed to polar residues. Composition is skewed to basic and acidic residues over residues 966–985 (KPEEVSRGSRRVTSETRKEK) and 1011–1034 (SRENVERERHENEGLINSGDKEFE). Positions 1035-1048 (SSASSSLPVQETQD) are enriched in polar residues. Residues 1066 to 1086 (FLLFLMFLVTVYHYDLMIGLA) traverse the membrane as a helical segment.

Interacts with PPP1CC catalytic subunit of PP1, and associates with glycogen. Phosphorylation at Ser-48 by ISPK stimulates the dephosphorylation of glycogen synthase and phosphorylase kinase. In terms of tissue distribution, skeletal muscle, diaphragm and cardiac muscle.

The protein localises to the membrane. Functionally, seems to act as a glycogen-targeting subunit for PP1. PP1 is essential for cell division, and participates in the regulation of glycogen metabolism, muscle contractility and protein synthesis. Plays an important role in glycogen synthesis but is not essential for insulin activation of glycogen synthase. This chain is Protein phosphatase 1 regulatory subunit 3A (PPP1R3A), found in Oryctolagus cuniculus (Rabbit).